The following is a 206-amino-acid chain: Large ribosomal subunit protein uL4 (206 aa).

The tract at residues 46-78 (GNRAQKDREQVKHTTKKPWRQKGTGRARAGMSS) is disordered. Residues 58–70 (HTTKKPWRQKGTG) show a composition bias toward basic residues.

Belongs to the universal ribosomal protein uL4 family. Part of the 50S ribosomal subunit.

One of the primary rRNA binding proteins, this protein initially binds near the 5'-end of the 23S rRNA. It is important during the early stages of 50S assembly. It makes multiple contacts with different domains of the 23S rRNA in the assembled 50S subunit and ribosome. In terms of biological role, forms part of the polypeptide exit tunnel. The protein is Large ribosomal subunit protein uL4 of Burkholderia lata (strain ATCC 17760 / DSM 23089 / LMG 22485 / NCIMB 9086 / R18194 / 383).